The sequence spans 120 residues: Large ribosomal subunit protein bL17 (120 aa).

The protein belongs to the bacterial ribosomal protein bL17 family. In terms of assembly, part of the 50S ribosomal subunit. Contacts protein L32.

This chain is Large ribosomal subunit protein bL17, found in Halalkalibacterium halodurans (strain ATCC BAA-125 / DSM 18197 / FERM 7344 / JCM 9153 / C-125) (Bacillus halodurans).